Consider the following 96-residue polypeptide: MPSSNGPLEGTRGKLKNKPRDRGTSPPQRAVEEFDDGEKVHLKIDPSVPNGRFHPRFDGQTGTVEGKQGDAYKVDIVDGGKEKTIIVTAAHLRRQE.

Residues methionine 1–glycine 66 are disordered.

The protein belongs to the eukaryotic ribosomal protein eL21 family. As to quaternary structure, part of the 50S ribosomal subunit. Interacts with protein L18 and binds the 5S rRNA. Has been cross-linked to L18.

Functionally, this is one of 5 proteins that mediate the attachment of the 5S rRNA onto the large ribosomal subunit, stabilizing the orientation of adjacent RNA domains. In Haloarcula marismortui (strain ATCC 43049 / DSM 3752 / JCM 8966 / VKM B-1809) (Halobacterium marismortui), this protein is Large ribosomal subunit protein eL21 (rpl21e).